The primary structure comprises 577 residues: Torulene dioxygenase (577 aa).

The segment at 1–20 (MALNGPGVYHRTREHEQEDA) is disordered. 4 residues coordinate Fe(2+): His239, His291, His361, and His570.

It belongs to the carotenoid oxygenase family. Fe(2+) is required as a cofactor.

It is found in the cytoplasm. The protein localises to the cytosol. It catalyses the reaction torulene + O2 = 4'-apo-beta-carotenal + 3-methyl-2-butenal. The protein operates within carotenoid biosynthesis. In terms of biological role, torulene dioxygenase; part of pathway that mediates the biosynthesis of neurosporaxanthin, a carboxylic apocarotenoid acting as an essential protective pigments and leading to orange pigmentation. CarT mediates the cleavage of torulene into beta-apo-4'-carotenal, the aldehyde corresponding to the acidic neurosporaxanthin. Is also active on other monocyclic synthetic substrates such as beta-apo-8'-carotenal and beta-apo-10'-carotenal to produce beta-apo-14'-carotenal and retinal(beta-apo-15'-carotenal), respectively. Neurosporaxanthin is synthesized from geranyl-geranyl pyrophosphate (GGPP) through several enzymatic activities. Phytoene synthase activity performed by the bifunctional enzyme carAR first produces phytoene from geranyl-geranyl pyrophosphate (GGPP). The phytoene dehydrogenase carB then introduces 4 desaturations to lead to lycopene which is substrate of the carotene cyclase activity of carAR that leads to the production of gamma-carotene. CarB then performs a 5th desaturation reaction to yield torulene. Torulene is the substrate of the dioxidase carT that breaks the molecule, removing five carbon atoms to yield beta-apo-4'-carotenal, whereas the aldehyde dehydrogenase carD mediates the last step by converting beta-apo-4'-carotenal into neurosporaxanthin. This is Torulene dioxygenase from Gibberella fujikuroi (strain CBS 195.34 / IMI 58289 / NRRL A-6831) (Bakanae and foot rot disease fungus).